The chain runs to 321 residues: Prephenate dehydratase (321 aa).

Positions 3-189 (RIAYLGPEGT…ARTRFVLVGR (187 aa)) constitute a Prephenate dehydratase domain. The 78-residue stretch at 203–280 (SAVLRIDNQP…ADVRYLGSWP (78 aa)) folds into the ACT domain.

As to quaternary structure, homodimer.

It catalyses the reaction prephenate + H(+) = 3-phenylpyruvate + CO2 + H2O. Its pathway is amino-acid biosynthesis; L-phenylalanine biosynthesis; phenylpyruvate from prephenate: step 1/1. This chain is Prephenate dehydratase (pheA), found in Mycobacterium bovis (strain ATCC BAA-935 / AF2122/97).